Consider the following 26-residue polypeptide: KIKWFKTMKSLAKFLAKEQMKKHLGE.

In terms of tissue distribution, expressed by the venom gland.

It is found in the secreted. The protein localises to the target cell membrane. Functionally, forms pore that permeabilize the cell membrane. Promotes efflux of calcium from synaptosomes, causes hemolysis, and dissipates voltage gradients across muscle membrane. Potently inhibits the growth of bacteria and yeast. May function both in the prey capture strategy as well as protection from infectious organisms arising from prey ingestion. The polypeptide is M-lycotoxin-Ls2a (Lycosa singoriensis (Wolf spider)).